The chain runs to 208 residues: Uracil phosphoribosyltransferase (208 aa).

Residues arginine 78, arginine 103, and 130 to 138 (DPMLATGGT) each bind 5-phospho-alpha-D-ribose 1-diphosphate. Uracil is bound by residues isoleucine 193 and 198-200 (GDA). Aspartate 199 provides a ligand contact to 5-phospho-alpha-D-ribose 1-diphosphate.

The protein belongs to the UPRTase family. It depends on Mg(2+) as a cofactor.

The enzyme catalyses UMP + diphosphate = 5-phospho-alpha-D-ribose 1-diphosphate + uracil. The protein operates within pyrimidine metabolism; UMP biosynthesis via salvage pathway; UMP from uracil: step 1/1. Its activity is regulated as follows. Allosterically activated by GTP. Functionally, catalyzes the conversion of uracil and 5-phospho-alpha-D-ribose 1-diphosphate (PRPP) to UMP and diphosphate. The chain is Uracil phosphoribosyltransferase from Desulfotalea psychrophila (strain LSv54 / DSM 12343).